Here is a 544-residue protein sequence, read N- to C-terminus: Chaperonin GroEL (544 aa).

Residues 29 to 32 (TLGP), 86 to 90 (DGTTT), Gly-413, 476 to 478 (NAA), and Asp-492 each bind ATP.

Belongs to the chaperonin (HSP60) family. As to quaternary structure, forms a cylinder of 14 subunits composed of two heptameric rings stacked back-to-back. Interacts with the co-chaperonin GroES.

The protein resides in the cytoplasm. It catalyses the reaction ATP + H2O + a folded polypeptide = ADP + phosphate + an unfolded polypeptide.. Together with its co-chaperonin GroES, plays an essential role in assisting protein folding. The GroEL-GroES system forms a nano-cage that allows encapsulation of the non-native substrate proteins and provides a physical environment optimized to promote and accelerate protein folding. This Halalkalibacterium halodurans (strain ATCC BAA-125 / DSM 18197 / FERM 7344 / JCM 9153 / C-125) (Bacillus halodurans) protein is Chaperonin GroEL.